A 458-amino-acid chain; its full sequence is Tetracycline resistance protein (458 aa).

12 consecutive transmembrane segments (helical) span residues 12-33 (HNQV…EMVL), 81-100 (LLLF…FVGH), 111-129 (FIQG…VVVA), 140-162 (AFGL…GGMV), 165-185 (YIHW…VPFL), 201-221 (MAGI…TTSY), 223-240 (FSFL…VQHI), 256-276 (VFFV…AGFV), 297-317 (GIIF…GLLV), 324-344 (YVLT…AFFI), 346-365 (AAPW…LSFT), and 432-451 (MLIL…LNVY).

This sequence belongs to the major facilitator superfamily. TCR/Tet family.

The protein localises to the cell membrane. Its function is as follows. Resistance to tetracycline by an active tetracycline efflux. This is an energy-dependent process that decreases the accumulation of the antibiotic in whole cells. This protein functions as a metal-tetracycline/H(+) antiporter. In Bacillus subtilis (strain 168), this protein is Tetracycline resistance protein (tetB).